The following is a 330-amino-acid chain: 4-hydroxythreonine-4-phosphate dehydrogenase (330 aa).

Residues His-136 and Thr-137 each contribute to the substrate site. Residues His-166, His-211, and His-266 each contribute to the a divalent metal cation site. Substrate contacts are provided by Lys-274, Asn-283, and Arg-292.

It belongs to the PdxA family. As to quaternary structure, homodimer. The cofactor is Zn(2+). Mg(2+) is required as a cofactor. Co(2+) serves as cofactor.

Its subcellular location is the cytoplasm. It carries out the reaction 4-(phosphooxy)-L-threonine + NAD(+) = 3-amino-2-oxopropyl phosphate + CO2 + NADH. It participates in cofactor biosynthesis; pyridoxine 5'-phosphate biosynthesis; pyridoxine 5'-phosphate from D-erythrose 4-phosphate: step 4/5. Its function is as follows. Catalyzes the NAD(P)-dependent oxidation of 4-(phosphooxy)-L-threonine (HTP) into 2-amino-3-oxo-4-(phosphooxy)butyric acid which spontaneously decarboxylates to form 3-amino-2-oxopropyl phosphate (AHAP). The chain is 4-hydroxythreonine-4-phosphate dehydrogenase from Erwinia tasmaniensis (strain DSM 17950 / CFBP 7177 / CIP 109463 / NCPPB 4357 / Et1/99).